Consider the following 232-residue polypeptide: MFSNAFTDKTVMAELVAKMLWEIKAVHFRADEPYKLSSGMASPVYIDCRKLISYPRIRSAVMDFAAATILRDAGFEQFDVVAGGETAGIPFAAMLAERLGLPMIYVRKAPKGHGRNAQIEGHMPEGARVLVIEDLTTAGGSMFKFIDAIRAAGGIVEHGIALFYYDIFPEARGNMKSKGVDLHYIATWRNVLAVAREQALFDEKTLNEVEAFLNAPLAWSERNGGVGTLAAQ.

5-phospho-alpha-D-ribose 1-diphosphate is bound by residues Arg107, Lys108, Lys111, His113, and 133 to 141; that span reads EDLTTAGGS. Thr137 provides a ligand contact to orotate.

The protein belongs to the purine/pyrimidine phosphoribosyltransferase family. PyrE subfamily. In terms of assembly, homodimer. Mg(2+) serves as cofactor.

It carries out the reaction orotidine 5'-phosphate + diphosphate = orotate + 5-phospho-alpha-D-ribose 1-diphosphate. It participates in pyrimidine metabolism; UMP biosynthesis via de novo pathway; UMP from orotate: step 1/2. Its function is as follows. Catalyzes the transfer of a ribosyl phosphate group from 5-phosphoribose 1-diphosphate to orotate, leading to the formation of orotidine monophosphate (OMP). This Sinorhizobium fredii (strain NBRC 101917 / NGR234) protein is Orotate phosphoribosyltransferase.